The primary structure comprises 603 residues: Arginine--tRNA ligase (603 aa).

Positions P143 to H153 match the 'HIGH' region motif.

The protein belongs to the class-I aminoacyl-tRNA synthetase family. In terms of assembly, monomer.

It localises to the cytoplasm. It catalyses the reaction tRNA(Arg) + L-arginine + ATP = L-arginyl-tRNA(Arg) + AMP + diphosphate. The sequence is that of Arginine--tRNA ligase from Prochlorococcus marinus (strain SARG / CCMP1375 / SS120).